The primary structure comprises 163 residues: Single-stranded DNA-binding protein 2 (163 aa).

An SSB domain is found at 1-104 (MINNVVLVGR…VVADNFQMLE (104 aa)). The disordered stretch occupies residues 109–163 (REGGSTGSFNGGFNNNTSSSNSYSAPAQQTPNFGRDDSPFGNSNPMDISDDDLPF). A compositionally biased stretch (low complexity) spans 119–130 (GGFNNNTSSSNS). Residues 131 to 140 (YSAPAQQTPN) show a composition bias toward polar residues. Residues 158 to 163 (DDDLPF) carry the Important for interaction with partner proteins motif.

In terms of assembly, homotetramer.

Its function is as follows. Plays an important role in DNA replication, recombination and repair. Binds to ssDNA and to an array of partner proteins to recruit them to their sites of action during DNA metabolism. This chain is Single-stranded DNA-binding protein 2 (ssb2), found in Streptococcus pyogenes serotype M18 (strain MGAS8232).